The chain runs to 97 residues: Large ribosomal subunit protein uL30m (97 aa).

It belongs to the universal ribosomal protein uL30 family. Component of the mitochondrial large ribosomal subunit (mt-LSU). Mature yeast 74S mitochondrial ribosomes consist of a small (37S) and a large (54S) subunit. The 37S small subunit contains a 15S ribosomal RNA (15S mt-rRNA) and at least 32 different proteins. The 54S large subunit contains a 21S rRNA (21S mt-rRNA) and at least 45 different proteins.

Its subcellular location is the mitochondrion. Component of the mitochondrial ribosome (mitoribosome), a dedicated translation machinery responsible for the synthesis of mitochondrial genome-encoded proteins, including at least some of the essential transmembrane subunits of the mitochondrial respiratory chain. The mitoribosomes are attached to the mitochondrial inner membrane and translation products are cotranslationally integrated into the membrane. This Schizosaccharomyces pombe (strain 972 / ATCC 24843) (Fission yeast) protein is Large ribosomal subunit protein uL30m (mrpl33).